The primary structure comprises 148 residues: D-aminoacyl-tRNA deacylase (148 aa).

The Gly-cisPro motif, important for rejection of L-amino acids signature appears at glycine 137 to proline 138.

Belongs to the DTD family. As to quaternary structure, homodimer.

The protein resides in the cytoplasm. It catalyses the reaction glycyl-tRNA(Ala) + H2O = tRNA(Ala) + glycine + H(+). The enzyme catalyses a D-aminoacyl-tRNA + H2O = a tRNA + a D-alpha-amino acid + H(+). Functionally, an aminoacyl-tRNA editing enzyme that deacylates mischarged D-aminoacyl-tRNAs. Also deacylates mischarged glycyl-tRNA(Ala), protecting cells against glycine mischarging by AlaRS. Acts via tRNA-based rather than protein-based catalysis; rejects L-amino acids rather than detecting D-amino acids in the active site. By recycling D-aminoacyl-tRNA to D-amino acids and free tRNA molecules, this enzyme counteracts the toxicity associated with the formation of D-aminoacyl-tRNA entities in vivo and helps enforce protein L-homochirality. The protein is D-aminoacyl-tRNA deacylase of Latilactobacillus sakei subsp. sakei (strain 23K) (Lactobacillus sakei subsp. sakei).